Reading from the N-terminus, the 211-residue chain is Mitotic spindle assembly checkpoint protein MAD2B (211 aa).

Positions 13–203 (QVVADVLSEF…SDILKMQLYV (191 aa)) constitute an HORMA domain.

As to quaternary structure, homooligomer. Interacts with REV1. Interacts with FZR1 (in complex with the anaphase promoting complex APC). May interact with CDC20. Heterodimer with REV3L. This dimer forms the minimal DNA polymerase zeta complex (Pol-zeta2), with REV3L bearing DNA polymerase catalytic activity, although its activity is very low in this context. Component of the tetrameric Pol-zeta complex (Pol-zeta4), which consists of REV3L, MAD2L2, POLD2 and POLD3; Pol-zeta4 is the fully active form of DNA polymerase zeta. Component of the shieldin complex, consisting of SHLD1, SHLD2, SHLD3 and MAD2L2/REV7. Within the complex, SHLD2 forms a scaffold which interacts with a SHLD3-MAD2L2 subcomplex via its N-terminus, and with SHLD1 via its C-terminus.

The protein localises to the nucleus. The protein resides in the cytoplasm. It localises to the cytoskeleton. It is found in the spindle. Its subcellular location is the chromosome. In terms of biological role, adapter protein able to interact with different proteins and involved in different biological processes. Mediates the interaction between the error-prone DNA polymerase zeta catalytic subunit REV3L and the inserter polymerase REV1, thereby mediating the second polymerase switching in translesion DNA synthesis. Translesion DNA synthesis releases the replication blockade of replicative polymerases, stalled in presence of DNA lesions. May also play a role in signal transduction in response to DNA damage. May regulate the activation of the anaphase promoting complex APC thereby regulating progression through the cell cycle. Component of the shieldin complex, which plays an important role in repair of DNA double-stranded breaks (DSBs). During G1 and S phase of the cell cycle, the complex functions downstream of TP53BP1 to promote non-homologous end joining (NHEJ) and suppress DNA end resection. Through transcriptional regulation may play a role in epithelial-mesenchymal transdifferentiation. The sequence is that of Mitotic spindle assembly checkpoint protein MAD2B (MAD2L2) from Gallus gallus (Chicken).